Consider the following 183-residue polypeptide: ATP synthase subunit b, chloroplastic (183 aa).

The helical transmembrane segment at L27–L49 threads the bilayer.

Belongs to the ATPase B chain family. In terms of assembly, F-type ATPases have 2 components, F(1) - the catalytic core - and F(0) - the membrane proton channel. F(1) has five subunits: alpha(3), beta(3), gamma(1), delta(1), epsilon(1). F(0) has four main subunits: a(1), b(1), b'(1) and c(10-14). The alpha and beta chains form an alternating ring which encloses part of the gamma chain. F(1) is attached to F(0) by a central stalk formed by the gamma and epsilon chains, while a peripheral stalk is formed by the delta, b and b' chains.

It localises to the plastid. Its subcellular location is the chloroplast thylakoid membrane. F(1)F(0) ATP synthase produces ATP from ADP in the presence of a proton or sodium gradient. F-type ATPases consist of two structural domains, F(1) containing the extramembraneous catalytic core and F(0) containing the membrane proton channel, linked together by a central stalk and a peripheral stalk. During catalysis, ATP synthesis in the catalytic domain of F(1) is coupled via a rotary mechanism of the central stalk subunits to proton translocation. Functionally, component of the F(0) channel, it forms part of the peripheral stalk, linking F(1) to F(0). This is ATP synthase subunit b, chloroplastic from Oryza nivara (Indian wild rice).